The chain runs to 189 residues: Large ribosomal subunit protein bL9 (189 aa).

Belongs to the bacterial ribosomal protein bL9 family.

In terms of biological role, binds to the 23S rRNA. The chain is Large ribosomal subunit protein bL9 from Brucella canis (strain ATCC 23365 / NCTC 10854 / RM-666).